The sequence spans 370 residues: WAT1-related protein At1g44800 (370 aa).

Transmembrane regions (helical) follow at residues 11-31 (PILA…ITMV), 41-61 (VLAT…ALMF), 67-87 (PKMT…EPLM), 102-122 (SYTS…ALIF), 142-162 (VITV…IEIV), 182-202 (WVLG…FFIL), 216-236 (LVTL…LIMV), 252-272 (AAVY…SIVI), 278-298 (VFTT…GALV), and 303-323 (IHLG…SVVW). EamA domains follow at residues 23–143 (AGMY…GTVI) and 195–322 (TWAA…YSVV).

Belongs to the drug/metabolite transporter (DMT) superfamily. Plant drug/metabolite exporter (P-DME) (TC 2.A.7.4) family.

It is found in the membrane. The polypeptide is WAT1-related protein At1g44800 (Arabidopsis thaliana (Mouse-ear cress)).